Reading from the N-terminus, the 357-residue chain is Poly(3-hydroxyalkanoate) polymerase subunit PhaE (357 aa).

A disordered region spans residues 320 to 357 (AALAGEEPATKPATALRSPAPAAKAPARRRTTKTNPAD). The span at 331–344 (PATALRSPAPAAKA) shows a compositional bias: low complexity.

It belongs to the PHA/PHB synthase family. Type III PhaE subfamily. A large complex of PhaC and PhaE; the ratio of the subunits has been estimated to be from 1:1 to 4:1, with more PhaE than PhaC.

It is found in the cytoplasm. It functions in the pathway biopolymer metabolism; poly-(R)-3-hydroxybutanoate biosynthesis. In terms of biological role, polymerizes D(-)-3-hydroxybutyryl-CoA to create polyhydroxybutyrate (PHB) which consists of thousands of hydroxybutyrate molecules linked end to end. This subunit has no catalytic activity but enhances the activity of PhaC, the catalytic subunit, 100-fold. The polypeptide is Poly(3-hydroxyalkanoate) polymerase subunit PhaE (Allochromatium vinosum (strain ATCC 17899 / DSM 180 / NBRC 103801 / NCIMB 10441 / D) (Chromatium vinosum)).